We begin with the raw amino-acid sequence, 233 residues long: Nickel import system ATP-binding protein NikE (233 aa).

In terms of domain architecture, ABC transporter spans 2-228; the sequence is IELKHVTFGY…DRHPYTKELV (227 aa). 35–42 contacts ATP; that stretch reads GESGCGKS.

The protein belongs to the ABC transporter superfamily. As to quaternary structure, the complex is composed of two ATP-binding proteins (NikD and NikE), two transmembrane proteins (NikB and NikC) and a solute-binding protein (NikA).

It is found in the cell membrane. The catalysed reaction is Ni(2+)(out) + ATP + H2O = Ni(2+)(in) + ADP + phosphate + H(+). Its function is as follows. Part of the ABC transporter complex NikABCDE (Opp2) involved in nickel import. Probably responsible for energy coupling to the transport system. This chain is Nickel import system ATP-binding protein NikE, found in Staphylococcus aureus (strain USA300).